We begin with the raw amino-acid sequence, 245 residues long: 7-cyano-7-deazaguanine synthase (245 aa).

19–29 (FSGGQDSATCL) provides a ligand contact to ATP. Residues Cys-207, Cys-222, Cys-225, and Cys-228 each coordinate Zn(2+).

This sequence belongs to the QueC family. It depends on Zn(2+) as a cofactor.

The enzyme catalyses 7-carboxy-7-deazaguanine + NH4(+) + ATP = 7-cyano-7-deazaguanine + ADP + phosphate + H2O + H(+). Its pathway is purine metabolism; 7-cyano-7-deazaguanine biosynthesis. Its function is as follows. Catalyzes the ATP-dependent conversion of 7-carboxy-7-deazaguanine (CDG) to 7-cyano-7-deazaguanine (preQ(0)). The chain is 7-cyano-7-deazaguanine synthase from Gluconacetobacter diazotrophicus (strain ATCC 49037 / DSM 5601 / CCUG 37298 / CIP 103539 / LMG 7603 / PAl5).